Reading from the N-terminus, the 486-residue chain is MDQGSQTIKGKDRYKSGVMEYRKMGYWEPDYEPKETDVIACFRITPQDGVDPIEAAAAVAGESSTATWTVVWTDRLTAAEKYRAKAYRVDQVPNTDDQYFAYIAYDLDLFENGSIANLTASIIGNVFGFKPLKGLRLEDMRLPTAYVKTFQGPATGIVVERERLDKFGRPLLGATVKPKLGLSGRNYGRVVYEALKGGLDFTKDDENINSQPFMDWRERFLYCMEAVNKAQAATGEIKGTYLNVTAATMEDMYERAEFARDLGSNIIMIDLVIGWTAMQSMAKWARRNNMILHLHRAGHSTYTRQKTHGVSFRVIAKWARLAGVDHIHAGTVVGKLEGDPATTKGYYDICRDEFTHRKLENGIFFDQPWASLNKMMPVASGGIHAGQMHQLLDLLGDDTVLQFGGGTIGHPMGIAAGATANRVALECMVLARNEGRDIVNEGPEILQEAARSCTPLQQALETWKDVTFNYTSTDSPDYAVTATASV.

Substrate contacts are provided by asparagine 125 and threonine 175. Lysine 177 serves as the catalytic Proton acceptor. Position 179 (lysine 179) interacts with substrate. Positions 203, 205, and 206 each coordinate Mg(2+). Lysine 203 bears the N6-carboxylysine mark. Histidine 295 functions as the Proton acceptor in the catalytic mechanism. The substrate site is built by arginine 296, histidine 328, and serine 380.

It belongs to the RuBisCO large chain family. Type I subfamily. Heterohexadecamer of 8 large chains and 8 small chains. Requires Mg(2+) as cofactor.

The enzyme catalyses 2 (2R)-3-phosphoglycerate + 2 H(+) = D-ribulose 1,5-bisphosphate + CO2 + H2O. It catalyses the reaction D-ribulose 1,5-bisphosphate + O2 = 2-phosphoglycolate + (2R)-3-phosphoglycerate + 2 H(+). Functionally, ruBisCO catalyzes two reactions: the carboxylation of D-ribulose 1,5-bisphosphate, the primary event in carbon dioxide fixation, as well as the oxidative fragmentation of the pentose substrate. Both reactions occur simultaneously and in competition at the same active site. This chain is Ribulose bisphosphate carboxylase large chain, found in Aurantimonas manganoxydans (strain ATCC BAA-1229 / DSM 21871 / SI85-9A1).